The chain runs to 99 residues: Aspartyl/glutamyl-tRNA(Asn/Gln) amidotransferase subunit C (99 aa).

Belongs to the GatC family. Heterotrimer of A, B and C subunits.

It carries out the reaction L-glutamyl-tRNA(Gln) + L-glutamine + ATP + H2O = L-glutaminyl-tRNA(Gln) + L-glutamate + ADP + phosphate + H(+). The enzyme catalyses L-aspartyl-tRNA(Asn) + L-glutamine + ATP + H2O = L-asparaginyl-tRNA(Asn) + L-glutamate + ADP + phosphate + 2 H(+). In terms of biological role, allows the formation of correctly charged Asn-tRNA(Asn) or Gln-tRNA(Gln) through the transamidation of misacylated Asp-tRNA(Asn) or Glu-tRNA(Gln) in organisms which lack either or both of asparaginyl-tRNA or glutaminyl-tRNA synthetases. The reaction takes place in the presence of glutamine and ATP through an activated phospho-Asp-tRNA(Asn) or phospho-Glu-tRNA(Gln). In Leptothrix cholodnii (strain ATCC 51168 / LMG 8142 / SP-6) (Leptothrix discophora (strain SP-6)), this protein is Aspartyl/glutamyl-tRNA(Asn/Gln) amidotransferase subunit C.